The chain runs to 397 residues: Tryptophan synthase beta chain (397 aa).

An N6-(pyridoxal phosphate)lysine modification is found at Lys87.

Belongs to the TrpB family. Tetramer of two alpha and two beta chains. It depends on pyridoxal 5'-phosphate as a cofactor.

It catalyses the reaction (1S,2R)-1-C-(indol-3-yl)glycerol 3-phosphate + L-serine = D-glyceraldehyde 3-phosphate + L-tryptophan + H2O. The protein operates within amino-acid biosynthesis; L-tryptophan biosynthesis; L-tryptophan from chorismate: step 5/5. The beta subunit is responsible for the synthesis of L-tryptophan from indole and L-serine. The sequence is that of Tryptophan synthase beta chain from Escherichia coli O139:H28 (strain E24377A / ETEC).